The sequence spans 106 residues: NADH-quinone oxidoreductase subunit K (106 aa).

The next 3 helical transmembrane spans lie at 10–30 (VTYI…GVLI), 34–54 (IVII…VFVT), and 67–87 (IVFF…ALVI).

This sequence belongs to the complex I subunit 4L family. As to quaternary structure, NDH-1 is composed of 14 different subunits. Subunits NuoA, H, J, K, L, M, N constitute the membrane sector of the complex.

The protein localises to the cell inner membrane. It catalyses the reaction a quinone + NADH + 5 H(+)(in) = a quinol + NAD(+) + 4 H(+)(out). Functionally, NDH-1 shuttles electrons from NADH, via FMN and iron-sulfur (Fe-S) centers, to quinones in the respiratory chain. The immediate electron acceptor for the enzyme in this species is believed to be ubiquinone. Couples the redox reaction to proton translocation (for every two electrons transferred, four hydrogen ions are translocated across the cytoplasmic membrane), and thus conserves the redox energy in a proton gradient. In Leptospira biflexa serovar Patoc (strain Patoc 1 / Ames), this protein is NADH-quinone oxidoreductase subunit K.